Here is a 504-residue protein sequence, read N- to C-terminus: ATP synthase subunit alpha (504 aa).

169–176 lines the ATP pocket; that stretch reads GDRQTGKT.

Belongs to the ATPase alpha/beta chains family. In terms of assembly, F-type ATPases have 2 components, CF(1) - the catalytic core - and CF(0) - the membrane proton channel. CF(1) has five subunits: alpha(3), beta(3), gamma(1), delta(1), epsilon(1). CF(0) has three main subunits: a(1), b(2) and c(9-12). The alpha and beta chains form an alternating ring which encloses part of the gamma chain. CF(1) is attached to CF(0) by a central stalk formed by the gamma and epsilon chains, while a peripheral stalk is formed by the delta and b chains.

The protein resides in the cell membrane. It carries out the reaction ATP + H2O + 4 H(+)(in) = ADP + phosphate + 5 H(+)(out). Its function is as follows. Produces ATP from ADP in the presence of a proton gradient across the membrane. The alpha chain is a regulatory subunit. This Clostridium botulinum (strain ATCC 19397 / Type A) protein is ATP synthase subunit alpha.